The sequence spans 286 residues: Beta-lactamase TEM (286 aa).

The signal sequence occupies residues 1-23; sequence MSIQHFRVALIPFFAAFCLPVFA. The Acyl-ester intermediate role is filled by Ser68. A disulfide bridge links Cys75 with Cys121. Glu166 acts as the Proton acceptor in catalysis. 232–234 is a binding site for substrate; that stretch reads KSG.

This sequence belongs to the class-A beta-lactamase family.

The enzyme catalyses a beta-lactam + H2O = a substituted beta-amino acid. Functionally, TEM-type are the most prevalent beta-lactamases in enterobacteria; they hydrolyze the beta-lactam bond in susceptible beta-lactam antibiotics, thus conferring resistance to penicillins and cephalosporins. TEM-3 and TEM-4 are capable of hydrolyzing cefotaxime and ceftazidime. TEM-5 is capable of hydrolyzing ceftazidime. TEM-6 is capable of hydrolyzing ceftazidime and aztreonam. TEM-8/CAZ-2, TEM-16/CAZ-7 and TEM-24/CAZ-6 are markedly active against ceftazidime. IRT-4 shows resistance to beta-lactamase inhibitors. In Escherichia coli, this protein is Beta-lactamase TEM (bla).